The following is a 258-amino-acid chain: Peptidase inhibitor 15 (258 aa).

Positions 1-21 are cleaved as a signal peptide; sequence MIMNSAVSLVILLSLLCEAHT. A propeptide spanning residues 22-60 is cleaved from the precursor; it reads VVLLNPTDSSLPANNFTDTEAALSTPLESADIPKARRKR. 2 N-linked (GlcNAc...) asparagine glycosylation sites follow: Asn36 and Asn124. One can recognise an SCP domain in the interval 71–211; sequence LDYHNQVRGK…RRAVYLVCNY (141 aa).

This sequence belongs to the CRISP family. Post-translationally, N-glycosylated. In terms of tissue distribution, weakly expressed. Expressed at low level in prostate, mammary gland, salivary gland and thyroid gland.

Its subcellular location is the secreted. Serine protease inhibitor which displays weak inhibitory activity against trypsin. May play a role in facial patterning during embryonic development. The chain is Peptidase inhibitor 15 (Pi15) from Mus musculus (Mouse).